A 415-amino-acid chain; its full sequence is Diaminopimelate decarboxylase (415 aa).

Residue lysine 60 is modified to N6-(pyridoxal phosphate)lysine. Pyridoxal 5'-phosphate is bound by residues glycine 239 and 273–276 (EPGR). Substrate contacts are provided by arginine 276, arginine 312, and tyrosine 316. Residue cysteine 342 is the Proton donor of the active site. Substrate is bound by residues glutamate 343 and tyrosine 370. Tyrosine 370 is a pyridoxal 5'-phosphate binding site.

The protein belongs to the Orn/Lys/Arg decarboxylase class-II family. LysA subfamily. As to quaternary structure, homodimer. Requires pyridoxal 5'-phosphate as cofactor.

The enzyme catalyses meso-2,6-diaminopimelate + H(+) = L-lysine + CO2. It functions in the pathway amino-acid biosynthesis; L-lysine biosynthesis via DAP pathway; L-lysine from DL-2,6-diaminopimelate: step 1/1. In terms of biological role, specifically catalyzes the decarboxylation of meso-diaminopimelate (meso-DAP) to L-lysine. The polypeptide is Diaminopimelate decarboxylase (Pseudomonas aeruginosa (strain ATCC 15692 / DSM 22644 / CIP 104116 / JCM 14847 / LMG 12228 / 1C / PRS 101 / PAO1)).